A 210-amino-acid polypeptide reads, in one-letter code: Cytochrome c4 (210 aa).

An N-terminal signal peptide occupies residues 1-20 (MNKVLVSLLLTLGITGMAHA). Cys-34, Cys-37, His-38, Met-86, Cys-139, Cys-142, His-143, and Met-187 together coordinate heme c.

In terms of processing, binds 2 heme c groups covalently per subunit.

The protein localises to the periplasm. Diheme, high potential cytochrome c believed to be an intermediate electron donor to terminal oxidation systems. The protein is Cytochrome c4 (cc4) of Stutzerimonas stutzeri (Pseudomonas stutzeri).